Here is a 431-residue protein sequence, read N- to C-terminus: 23S rRNA (uracil(1939)-C(5))-methyltransferase RlmD (431 aa).

Residues 10-68 (RVTTRQIITVKVNDLDSFGQGVARHNGKALFIPGLLPEESAEVIITEDKKQFARARVSR) form the TRAM domain. [4Fe-4S] cluster is bound by residues cysteine 81, cysteine 87, cysteine 90, and cysteine 161. Residues glutamine 264, phenylalanine 293, asparagine 298, glutamate 314, asparagine 341, and aspartate 362 each contribute to the S-adenosyl-L-methionine site. Cysteine 388 functions as the Nucleophile in the catalytic mechanism.

Belongs to the class I-like SAM-binding methyltransferase superfamily. RNA M5U methyltransferase family. RlmD subfamily.

The catalysed reaction is uridine(1939) in 23S rRNA + S-adenosyl-L-methionine = 5-methyluridine(1939) in 23S rRNA + S-adenosyl-L-homocysteine + H(+). Catalyzes the formation of 5-methyl-uridine at position 1939 (m5U1939) in 23S rRNA. The chain is 23S rRNA (uracil(1939)-C(5))-methyltransferase RlmD from Salmonella choleraesuis (strain SC-B67).